A 272-amino-acid polypeptide reads, in one-letter code: uncharacterized protein (272 aa).

Basic and acidic residues-rich tracts occupy residues 136 to 156 (VRRE…HIDI) and 231 to 240 (GCKESRRNEP). 2 disordered regions span residues 136 to 157 (VRRE…IDIH) and 174 to 272 (VKPK…WAAF). Over residues 243–252 (DLSQLKKNLP) the composition is skewed to polar residues. The segment covering 253–272 (STAGSGSSKSTGAASGWAAF) has biased composition (low complexity).

This is an uncharacterized protein from Arabidopsis thaliana (Mouse-ear cress).